The primary structure comprises 118 residues: Small ribosomal subunit protein uS13 (118 aa).

The segment at 94–118 (GLPLRGQRTRTNARTRKGPRKAIRK) is disordered.

It belongs to the universal ribosomal protein uS13 family. In terms of assembly, part of the 30S ribosomal subunit. Forms a loose heterodimer with protein S19. Forms two bridges to the 50S subunit in the 70S ribosome.

Functionally, located at the top of the head of the 30S subunit, it contacts several helices of the 16S rRNA. In the 70S ribosome it contacts the 23S rRNA (bridge B1a) and protein L5 of the 50S subunit (bridge B1b), connecting the 2 subunits; these bridges are implicated in subunit movement. Contacts the tRNAs in the A and P-sites. The chain is Small ribosomal subunit protein uS13 from Xanthomonas axonopodis pv. citri (strain 306).